Reading from the N-terminus, the 274-residue chain is Trehalose transport system permease protein SugB (274 aa).

The next 6 membrane-spanning stretches (helical) occupy residues 8 to 28 (YWAVLDTLVVGYALLPVLWIF), 70 to 90 (IGIGLITTVIAVVLGAMAAYA), 102 to 122 (LIGAALLITMFPSISLVTPLF), 137 to 157 (LILPYITFALPLAIYTLSAFF), 182 to 202 (VIVPLAAPGLVTAAILVFIFA), and 239 to 259 (GSIAAGAIVITIPIIVFVLIF). Positions 66-259 (LINSIGIGLI…IPIIVFVLIF (194 aa)) constitute an ABC transmembrane type-1 domain.

Belongs to the binding-protein-dependent transport system permease family. As to quaternary structure, the complex is composed of two ATP-binding proteins (SugC), two transmembrane proteins (Suga and SugB) and a solute-binding protein (LpqY).

The protein localises to the cell inner membrane. Part of the ABC transporter complex LpqY-SugA-SugB-SugC, which is highly specific for uptake of trehalose. Involved in the recycling of extracellular trehalose released from trehalose-containing molecules synthesized by M.tuberculosis. Trehalose uptake is essential for virulence. Probably responsible for the translocation of the substrate across the membrane. This is Trehalose transport system permease protein SugB (sugB) from Mycobacterium tuberculosis (strain CDC 1551 / Oshkosh).